Here is a 304-residue protein sequence, read N- to C-terminus: Coenzyme PQQ synthesis protein B (304 aa).

It belongs to the PqqB family.

The protein operates within cofactor biosynthesis; pyrroloquinoline quinone biosynthesis. In terms of biological role, may be involved in the transport of PQQ or its precursor to the periplasm. The chain is Coenzyme PQQ synthesis protein B from Pseudomonas aeruginosa (strain LESB58).